The chain runs to 228 residues: MTARRAPAVNRDVLEQMLVDGTAALDIALTDAQRNQLLDYVALLGKWNAVYNLTAIRDPKQMLIQHILDSLSIVPHLRDRASARVLDVGSGGGLPGIVLAIVQPDWQVTLNDIVQKKSAFQTQMRAELKLANLSVVTGRVELLQPGVEVPEKFDMIVSRAFADLSDFVKLARHLVAPGGSIWAMKGVHPDDEIARLPEGSRVKQTMRLAVPMLDAERHLIEVVVDEAN.

S-adenosyl-L-methionine is bound by residues Gly-89, Leu-94, 140 to 141, and Arg-159; that span reads VE.

This sequence belongs to the methyltransferase superfamily. RNA methyltransferase RsmG family.

It localises to the cytoplasm. It catalyses the reaction guanosine(527) in 16S rRNA + S-adenosyl-L-methionine = N(7)-methylguanosine(527) in 16S rRNA + S-adenosyl-L-homocysteine. Its function is as follows. Specifically methylates the N7 position of guanine in position 527 of 16S rRNA. This Burkholderia ambifaria (strain MC40-6) protein is Ribosomal RNA small subunit methyltransferase G.